The primary structure comprises 698 residues: Testis-specific gene 10 protein (698 aa).

Serine 163 carries the phosphoserine modification. The segment at 556 to 689 (QMANERISMQ…SPDRGLDRSL (134 aa)) is interaction with HIF1A. The span at 659-670 (HMSSTMKPNTKC) shows a compositional bias: polar residues. Residues 659–685 (HMSSTMKPNTKCHSPERAHHRSPDRGL) form a disordered region. Positions 671 to 685 (HSPERAHHRSPDRGL) are enriched in basic and acidic residues. At serine 688 the chain carries Phosphoserine.

It belongs to the CEP135/TSGA10 family. As to quaternary structure, interacts with HIF1A. Processed into N-terminal 27-kDa and C-terminal 55-kDa fragments. In terms of tissue distribution, expressed in the testis, in spermatozoa (at protein level). Expressed in actively dividing fetal tissues, including sternum, intestine, limb, kidney and stomach.

Its subcellular location is the cytoplasm. It localises to the cytoskeleton. It is found in the microtubule organizing center. The protein resides in the centrosome. The protein localises to the centriole. In terms of biological role, plays a role in spermatogenesis. When overexpressed, prevents nuclear localization of HIF1A. This is Testis-specific gene 10 protein (TSGA10) from Homo sapiens (Human).